The primary structure comprises 345 residues: NADPH dehydrogenase (345 aa).

Residue 23-26 (SPMC) coordinates FMN. Substrate is bound at residue Y28. Residues A60 and Q102 each coordinate FMN. A substrate-binding site is contributed by 164 to 167 (HGAH). Residues R215 and 307–308 (GR) each bind FMN.

This sequence belongs to the NADH:flavin oxidoreductase/NADH oxidase family. NamA subfamily. Homotetramer. FMN serves as cofactor.

The enzyme catalyses A + NADPH + H(+) = AH2 + NADP(+). In terms of biological role, catalyzes the reduction of the double bond of an array of alpha,beta-unsaturated aldehydes and ketones. It also reduces the nitro group of nitroester and nitroaromatic compounds. It could have a role in detoxification processes. The sequence is that of NADPH dehydrogenase from Bacillus cereus (strain AH187).